The following is a 483-amino-acid chain: Pentatricopeptide repeat-containing protein At5g18950 (483 aa).

PPR repeat units follow at residues 144–178 (EPTLLEQYVKCLSEEGLVEEAIEVYNVLKDMGISS), 179–213 (SVVTCNSVLLGCLKARKLDRFWELHKEMVESEFDS), 218–246 (CLIRALCDGGDVSEGYELLKQGLKQGLDP), 247–281 (GQYVYAKLISGFCEIGNYACMSEVLHTMIAWNHFP), 282–316 (SMYIYQKIIKGLCMNKKQLEAYCIFKNLKDKGYAP), 317–351 (DRVVYTTMIRGFCEKGWLGSARKLWFEMIKKGMRP), 352–386 (NEFAYNVMIHGHFKRGEISLVEAFYNEMLRNGYGG), 387–421 (TMLSCNTMIKGFCSHGKSDEAFEIFKNMSETGVTP), and 422–456 (NAITYNALIKGFCKENKVEKGLKLYKELKALGLKP).

It belongs to the PPR family. P subfamily.

This Arabidopsis thaliana (Mouse-ear cress) protein is Pentatricopeptide repeat-containing protein At5g18950.